A 508-amino-acid polypeptide reads, in one-letter code: MGLPWYRVHTVVLNDPGRLLSVHIMHTALVSGWAGSMALYELAVFDPSDPILDPMWRQGMFVIPFMTRLGITNSWGGWSITGGTVTNPGIWSYEGVAGAHIVFSGLCFLASIWHWVYWDLEIFCDERTGKPSLDLPKIFGIHLFLSGVACFGFGAFHVTGLYGPGIWVSDPYGLTGKVQSVNPAWGAEGFDPFVPGGIASHHIAAGTLGILAGLFHLSVRPPQRLYKGLRMGNIETVLSSSIAAVFFAAFIVAGTMWYGSATTPIELFGPTRYQWDQGYFQQEIYRRVGTGLAENLSLSEAWSKIPDKLAFYDYIGNNPAKGGLFRAGSMDNGDGIAVGWLGHPIFRDKEGHELFVRRMPTFFETFPVVLVDGDGIVRADVPFRRAESKYSVEQVGVTVEFYGGELNRVSYSDPATVKKYARRAQLGEIFELDRATLKSDGVFRSSPRGWFTFGHASFALLFFFGHIWHGARTLFRDVFAGIDPDLDAQVEFGAFQKIGDPTTRRQIV.

Helical transmembrane passes span 21–36 (SVHIMHTALVSGWAGS), 101–115 (IVFSGLCFLASIWHW), 140–156 (GIHLFLSGVACFGFGAF), 203–218 (IAAGTLGILAGLFHLS), 237–252 (VLSSSIAAVFFAAFIV), and 457–472 (SFALLFFFGHIWHGAR).

The protein belongs to the PsbB/PsbC family. PsbB subfamily. PSII is composed of 1 copy each of membrane proteins PsbA, PsbB, PsbC, PsbD, PsbE, PsbF, PsbH, PsbI, PsbJ, PsbK, PsbL, PsbM, PsbT, PsbX, PsbY, PsbZ, Psb30/Ycf12, at least 3 peripheral proteins of the oxygen-evolving complex and a large number of cofactors. It forms dimeric complexes. Requires Binds multiple chlorophylls. PSII binds additional chlorophylls, carotenoids and specific lipids. as cofactor.

It is found in the plastid. It localises to the chloroplast thylakoid membrane. Functionally, one of the components of the core complex of photosystem II (PSII). It binds chlorophyll and helps catalyze the primary light-induced photochemical processes of PSII. PSII is a light-driven water:plastoquinone oxidoreductase, using light energy to abstract electrons from H(2)O, generating O(2) and a proton gradient subsequently used for ATP formation. The chain is Photosystem II CP47 reaction center protein from Amborella trichopoda.